A 207-amino-acid polypeptide reads, in one-letter code: Protein GrpE (207 aa).

2 stretches are compositionally biased toward basic and acidic residues: residues 1-11 and 57-66; these read MEENRDVKNEE and DLVKNQEEEN. The tract at residues 1–66 is disordered; it reads MEENRDVKNE…DLVKNQEEEN (66 aa).

This sequence belongs to the GrpE family. In terms of assembly, homodimer.

The protein resides in the cytoplasm. In terms of biological role, participates actively in the response to hyperosmotic and heat shock by preventing the aggregation of stress-denatured proteins, in association with DnaK and GrpE. It is the nucleotide exchange factor for DnaK and may function as a thermosensor. Unfolded proteins bind initially to DnaJ; upon interaction with the DnaJ-bound protein, DnaK hydrolyzes its bound ATP, resulting in the formation of a stable complex. GrpE releases ADP from DnaK; ATP binding to DnaK triggers the release of the substrate protein, thus completing the reaction cycle. Several rounds of ATP-dependent interactions between DnaJ, DnaK and GrpE are required for fully efficient folding. The polypeptide is Protein GrpE (Clostridium beijerinckii (strain ATCC 51743 / NCIMB 8052) (Clostridium acetobutylicum)).